The primary structure comprises 776 residues: Ecdysone receptor (776 aa).

A modulating region spans residues 1–290 (MYRLNIVSTN…GPTPRQQEEL (290 aa)). The disordered stretch occupies residues 199 to 283 (NEEWISSPSP…DAKKQKKGPT (85 aa)). Over residues 204–213 (SSPSPGSVPG) the composition is skewed to low complexity. Polar residues-rich tracts occupy residues 227 to 245 (TTYT…STGS) and 261 to 270 (SPSSSLNGYT). A DNA-binding region (nuclear receptor) is located at residues 288–363 (EELCLVCGDR…VGMRPECVVP (76 aa)). 2 NR C4-type zinc fingers span residues 291 to 311 (CLVC…CEGC) and 327 to 346 (CKFG…CQEC). Positions 437 to 673 (NQMAVIYKLI…FLEEIWDVQD (237 aa)) constitute an NR LBD domain. The segment covering 679-688 (QAQMHSHGTQ) has biased composition (polar residues). The segment at 679–776 (QAQMHSHGTQ…VPGLGMLDQV (98 aa)) is disordered. Residues 689-745 (SSSSSSSSSSSSSNGSSNGNSSSNSNSSQHGPHPHPHGQQLTPNQQQHQQQHSQLQQ) show a composition bias toward low complexity.

Belongs to the nuclear hormone receptor family. NR1 subfamily. In terms of assembly, heterodimer of USP and ECR. Only the heterodimer is capable of high-affinity binding to ecdysone. In terms of tissue distribution, a peak level expression is seen in the fat body of previtellogenic female mosquitos at one and two days after eclosion, levels fall three-fold at three days posteclosion.

It localises to the nucleus. Functionally, receptor for ecdysone. Binds to ecdysone response elements (ECRES). This is Ecdysone receptor (EcR) from Aedes aegypti (Yellowfever mosquito).